The sequence spans 849 residues: Pre-mRNA-processing ATP-dependent RNA helicase PRP5 (849 aa).

Residues 13–81 (ESLLEERRKK…RKRKNEFRKS (69 aa)) adopt a coiled-coil conformation. The disordered stretch occupies residues 28–138 (QKKAQFDAQK…PEHDNEKDPL (111 aa)). Polar residues predominate over residues 38-54 (ENQTSRNDIVTNSLEGK). A compositionally biased stretch (basic and acidic residues) spans 55–85 (QTTEKFTERQERVKEELRKRKNEFRKSDEPV). Basic residues predominate over residues 89-102 (PSKKKSKRSKVKKK). The span at 120 to 138 (RSKEHIQKVPEHDNEKDPL) shows a compositional bias: basic and acidic residues. The Q motif motif lies at 255–284 (TKWSQLGLSTDTMVLITEKLHFGSLTPIQS). The Helicase ATP-binding domain occupies 287–467 (LPAIMSGRDV…VRVLHSPISI (181 aa)). Position 300–307 (300–307 (SKTGSGKT)) interacts with ATP. Residues 415–418 (DEAD) carry the DEAD box motif. Residues 502–661 (ERSEFFDEVQ…LDPLQAKELQ (160 aa)) form the Helicase C-terminal domain. A compositionally biased stretch (basic and acidic residues) spans 689–728 (NIKSKREEAQNKDLELKKNDKRSDDLEKKINNPHEGHDSE). Residues 689 to 731 (NIKSKREEAQNKDLELKKNDKRSDDLEKKINNPHEGHDSEPES) are disordered.

It belongs to the DEAD box helicase family. DDX46/PRP5 subfamily. Interacts with the U2 snRNP and HSH155.

The protein resides in the nucleus. It carries out the reaction ATP + H2O = ADP + phosphate + H(+). Functionally, ATP-dependent RNA helicase involved spliceosome assembly and in nuclear splicing. Catalyzes an ATP-dependent conformational change of U2 snRNP. Bridges U1 and U2 snRNPs and enables stable U2 snRNP association with intron RNA. This is Pre-mRNA-processing ATP-dependent RNA helicase PRP5 (PRP5) from Saccharomyces cerevisiae (strain YJM789) (Baker's yeast).